The chain runs to 353 residues: Ribosomal RNA small subunit methyltransferase H (353 aa).

Residues 49 to 51 (GGH), D68, F95, D126, and Q133 contribute to the S-adenosyl-L-methionine site.

Belongs to the methyltransferase superfamily. RsmH family.

The protein localises to the cytoplasm. The enzyme catalyses cytidine(1402) in 16S rRNA + S-adenosyl-L-methionine = N(4)-methylcytidine(1402) in 16S rRNA + S-adenosyl-L-homocysteine + H(+). Functionally, specifically methylates the N4 position of cytidine in position 1402 (C1402) of 16S rRNA. The sequence is that of Ribosomal RNA small subunit methyltransferase H from Corynebacterium urealyticum (strain ATCC 43042 / DSM 7109).